The primary structure comprises 934 residues: Pesticidal crystal protein Cry1Aa (934 aa).

This sequence belongs to the delta endotoxin family.

Promotes colloidosmotic lysis by binding to the midgut epithelial cells of many lepidopteran larvae. The protein is Pesticidal crystal protein Cry1Aa (cry1Aa) of Bacillus thuringiensis subsp. sotto.